A 62-amino-acid polypeptide reads, in one-letter code: Ferredoxin-1 (62 aa).

4Fe-4S ferredoxin-type domains follow at residues 3–32 and 33–62; these read WTVTVDTDKCTGDGECVDVCPVEVYELQDG and KAVPVNEEECLGCESCVEVCEAGAITVEEN. The [3Fe-4S] cluster site is built by C12 and C18. C22, C42, C45, and C48 together coordinate [4Fe-4S] cluster. C52 serves as a coordination point for [3Fe-4S] cluster.

As to quaternary structure, homodimer. It depends on [3Fe-4S] cluster as a cofactor. Requires [4Fe-4S] cluster as cofactor.

In terms of biological role, ferredoxins are iron-sulfur proteins that transfer electrons in a wide variety of metabolic reactions. This ferredoxin serves as a carrier for pyruvate dehydrogenase. The protein is Ferredoxin-1 of Nitratidesulfovibrio vulgaris (strain DSM 19637 / Miyazaki F) (Desulfovibrio vulgaris).